A 94-amino-acid chain; its full sequence is Small ribosomal subunit protein uS19c (94 aa).

The protein belongs to the universal ribosomal protein uS19 family.

It is found in the plastid. Its subcellular location is the chloroplast. In terms of biological role, protein S19 forms a complex with S13 that binds strongly to the 16S ribosomal RNA. The sequence is that of Small ribosomal subunit protein uS19c (rps19) from Euglena gracilis.